The sequence spans 349 residues: Small ribosomal subunit biogenesis GTPase RsgA (349 aa).

Residues 1–38 (MSKNKLSKGQERRVQANHQRRLKRTDNKPELDDSQLGE) form a disordered region. Residues 102-272 (TSVLNRPDIY…VIDSPGVREF (171 aa)) enclose the CP-type G domain. Residues 158–161 (NKID) and 212–220 (GQSGVGKSS) contribute to the GTP site. Cys-296, Cys-301, His-303, and Cys-309 together coordinate Zn(2+).

It belongs to the TRAFAC class YlqF/YawG GTPase family. RsgA subfamily. As to quaternary structure, monomer. Associates with 30S ribosomal subunit, binds 16S rRNA. The cofactor is Zn(2+).

The protein localises to the cytoplasm. Functionally, one of several proteins that assist in the late maturation steps of the functional core of the 30S ribosomal subunit. Helps release RbfA from mature subunits. May play a role in the assembly of ribosomal proteins into the subunit. Circularly permuted GTPase that catalyzes slow GTP hydrolysis, GTPase activity is stimulated by the 30S ribosomal subunit. This Serratia proteamaculans (strain 568) protein is Small ribosomal subunit biogenesis GTPase RsgA.